The primary structure comprises 809 residues: Lethal factor (809 aa).

The signal sequence occupies residues 1 to 33 (MNIKKEFIKVISMSCLVTAITLSGPVFIPLVQG). Residues 39-66 (DVGMHVKEKEKNKDENKRKDEERNKTQE) are disordered. The segment covering 40 to 66 (VGMHVKEKEKNKDENKRKDEERNKTQE) has biased composition (basic and acidic residues). The i; PA-binding region stretch occupies residues 60-295 (ERNKTQEEHL…NLSLEELKDQ (236 aa)). An ATLF-like 1 domain is found at 70-282 (KEIMKHIVKI…AFNYMDKFNE (213 aa)). Residues 296–330 (RMLARYEKWEKIKQHYQHWSDSLSEEGRGLLKKLQ) form an IIA region. 5 consecutive repeat copies span residues 315 to 333 (SDSL…QIPI), 342 to 357 (HSLS…RIQI), 360 to 378 (SDFL…QIDI), 380 to 397 (DSLS…QVDS), and 399 to 416 (NPLS…KLDI). Positions 315-416 (SDSLSEEGRG…EFLKKLKLDI (102 aa)) are 5 X approximate repeats. The tract at residues 336–416 (KKDDIIHSLS…EFLKKLKLDI (81 aa)) is III. Residues 420-583 (DINQRLQDTG…EYIRIDAKVV (164 aa)) form an IIB region. Residues 585-809 (KSKIDTKIQE…NDQIKFIINS (225 aa)) are IV. One can recognise an ATLF-like 2 domain in the interval 609-804 (LPKYTKLITF…TFQFINDQIK (196 aa)). His-719 is a binding site for Zn(2+). The Proton acceptor role is filled by Glu-720. Positions 723, 761, and 768 each coordinate Zn(2+).

Belongs to the peptidase M34 family. In terms of assembly, interacts (via ATLF domain 1) with the cleaved form of protective antigen (PA-63) anthrax toxin; interaction is required for LF translocation into the host cytoplasm. Interacts with PA-63 homooligomers (either homoheptamers or homooctamers): three molecules of LF bind the PA-63 homoheptamer to form the PA(7)LF(3) complex, in which the relative position of the N-terminal alpha-helices in the three LFs determines which factor is translocated first. Requires Zn(2+) as cofactor.

It localises to the secreted. The protein resides in the host cytoplasm. It is found in the host cytosol. The catalysed reaction is Preferred amino acids around the cleavage site can be denoted BBBBxHx-|-H, in which B denotes Arg or Lys, H denotes a hydrophobic amino acid, and x is any amino acid. The only known protein substrates are mitogen-activated protein (MAP) kinase kinases.. With respect to regulation, inhibited by NSC-12155 (1,3-Bis(2-methyl-4-aminoquinoline-6-yl)ure). Inhibited by phenoxyacetic acid bearing alpha-benzyl substituents on the C2-side chain. Inhibited by sulfonamide hydroxamate with benzylic additions at the sulfonamide nitrogen. Also inhibited by sulfonamide hydroxamates with alkylation at the sulfonamide nitrogen. Inhibited by hydroxamic acid inhibitors. Lethal factor (LF), which constitutes one of the three proteins composing the anthrax toxin, is able to trigger rapid cell death in macrophages. Acts as a protease that cleaves the N-terminal of most dual specificity mitogen-activated protein kinase kinases (MAPKKs or MAP2Ks) (except for MAP2K5): cleavage invariably occurs within the N-terminal proline-rich region preceding the kinase domain, thus disrupting a sequence involved in directing specific protein-protein interactions necessary for the assembly of signaling complexes. Also cleaves mouse Nlrp1b: host Nlrp1b cleavage promotes ubiquitination and degradation of the N-terminal part of Nlrp1b by the proteasome, thereby releasing the cleaved C-terminal part of Nlrp1b, which polymerizes and forms the Nlrp1b inflammasome followed by host cell pyroptosis. Able to cleave mouse Nlrp1b alleles 1 and 5, while it is not able to cleave Nlrp1b alleles 2, 3 and 4. In contrast, does not cleave NLRP1 human ortholog. LF is not toxic by itself and only acts as a lethal factor when associated with protective antigen (PA) to form the lethal toxin (LeTx): PA is required for LF translocation into the host cytosol. The polypeptide is Lethal factor (Bacillus anthracis).